We begin with the raw amino-acid sequence, 1142 residues long: Enamelin (1142 aa).

The N-terminal stretch at 1 to 38 (MLLSCRHGASSPKLDNLVPSGKMKILLVFLGLLCYSAA) is a signal peptide. A Phosphoserine modification is found at Ser-53. Disordered stretches follow at residues 90–347 (YQMP…FYRN), 374–513 (YRRV…IIPK), 543–587 (TEGI…LSHG), and 603–662 (RENS…FPGQ). Residues 128 to 148 (QPQPKTPTPKQPLNEPSPTPT) are compositionally biased toward pro residues. 2 positions are modified to phosphoserine: Ser-191 and Ser-216. Basic and acidic residues predominate over residues 223-234 (DFEKPKEKDPPK). Composition is skewed to polar residues over residues 243 to 303 (SVNT…SQSP) and 381 to 395 (TARS…NSAN). N-linked (GlcNAc...) asparagine glycosylation is found at Asn-245, Asn-252, Asn-264, and Asn-291. Residues 277-514 (NPRSNPTGQN…QTQTQIIPKG (238 aa)) constitute a propeptide that is removed on maturation. Residues 431–442 (PREKQVSQKERT) are compositionally biased toward basic and acidic residues. Positions 453–467 (WRNSQDYGINKSNYK) are enriched in polar residues. Asn-462 carries N-linked (GlcNAc...) asparagine glycosylation. Pro-547 is modified (hydroxyproline). Positions 570 to 582 (FKEDPGRQEEHLP) are enriched in basic and acidic residues. Positions 666–669 (DMEE) are excised as a propeptide. Residues 787–816 (NLYKTPTSSPHQKENQPYSNNSPAGLQKNP) are compositionally biased toward polar residues. Disordered stretches follow at residues 787 to 820 (NLYK…TWHE), 921 to 965 (TSIV…SQLS), and 1020 to 1049 (VFGT…QQRQ). An N-linked (GlcNAc...) asparagine glycan is attached at Asn-929. Positions 952–965 (LRRSTPCSVKSQLS) are enriched in polar residues. The N-linked (GlcNAc...) asparagine glycan is linked to Asn-1040.

Post-translationally, proteolytically cleaved into several smaller polypeptides. Cleavage of N-terminal region of enamelin occurs soon after secretion. In terms of processing, phosphorylated by FAM20C in vitro. As to expression, expressed by secretory-phase ameloblasts. Intact enamelin and large-molecular-weight enamelins are limited to the most superficial layer of the developing enamel matrix, while low-molecular-weight enamelins are observed in deeper enamelin. Preferential localization among the crystallites in rod and interrod enamel.

It localises to the secreted. The protein localises to the extracellular space. It is found in the extracellular matrix. Functionally, involved in the mineralization and structural organization of enamel. Involved in the extension of enamel during the secretory stage of dental enamel formation. This Sus scrofa (Pig) protein is Enamelin (ENAM).